The sequence spans 149 residues: 3-hydroxyacyl-[acyl-carrier-protein] dehydratase FabZ (149 aa).

Residue His53 is part of the active site.

This sequence belongs to the thioester dehydratase family. FabZ subfamily.

It is found in the cytoplasm. The catalysed reaction is a (3R)-hydroxyacyl-[ACP] = a (2E)-enoyl-[ACP] + H2O. Functionally, involved in unsaturated fatty acids biosynthesis. Catalyzes the dehydration of short chain beta-hydroxyacyl-ACPs and long chain saturated and unsaturated beta-hydroxyacyl-ACPs. The sequence is that of 3-hydroxyacyl-[acyl-carrier-protein] dehydratase FabZ from Polynucleobacter necessarius subsp. necessarius (strain STIR1).